The sequence spans 207 residues: Ras-related protein rab7 (207 aa).

GTP-binding positions include 15-22 (GDSGVGKT), 34-40 (SNQYKAT), 63-67 (DTAGQ), 125-128 (NKID), and 156-157 (AK). The Effector region motif lies at 37-45 (YKATIGADF). S-geranylgeranyl cysteine attachment occurs at residues Cys-205 and Cys-207. Residue Cys-207 is modified to Cysteine methyl ester.

It belongs to the small GTPase superfamily. Rab family. As to quaternary structure, (Microbial infection) Interacts with Singapore grouper iridoviral proteins VP69 (ORF69) and VP101 (ORF101). In terms of tissue distribution, ubiquitously expressed. Expressed in liver, spleen, kidney, brain, intestine, heart, skin, muscle, gill and stomach.

Its subcellular location is the late endosome membrane. The protein localises to the lysosome membrane. Key regulator in endo-lysosomal trafficking. Governs early-to-late endosomal maturation, microtubule minus-end as well as plus-end directed endosomal migration and positioning, and endosome-lysosome transport through different protein-protein interaction cascades. Plays important roles in microbial pathogen infection and survival, as well as in participating in the life cycle of viruses. This chain is Ras-related protein rab7, found in Epinephelus coioides (Orange-spotted grouper).